The following is a 404-amino-acid chain: tRNA/tmRNA (uracil-C(5))-methyltransferase (404 aa).

Residues glutamine 218, tyrosine 251, asparagine 256, glutamate 272, and aspartate 332 each coordinate S-adenosyl-L-methionine. Residue cysteine 358 is the Nucleophile of the active site. The active-site Proton acceptor is glutamate 392.

This sequence belongs to the class I-like SAM-binding methyltransferase superfamily. RNA M5U methyltransferase family. TrmA subfamily.

It carries out the reaction uridine(54) in tRNA + S-adenosyl-L-methionine = 5-methyluridine(54) in tRNA + S-adenosyl-L-homocysteine + H(+). The enzyme catalyses uridine(341) in tmRNA + S-adenosyl-L-methionine = 5-methyluridine(341) in tmRNA + S-adenosyl-L-homocysteine + H(+). Functionally, dual-specificity methyltransferase that catalyzes the formation of 5-methyluridine at position 54 (m5U54) in all tRNAs, and that of position 341 (m5U341) in tmRNA (transfer-mRNA). The polypeptide is tRNA/tmRNA (uracil-C(5))-methyltransferase (Helicobacter hepaticus (strain ATCC 51449 / 3B1)).